The primary structure comprises 1272 residues: MENTTILTVKDLVNEGIAVTGASSLFSSAASHSSSESTSTNPKSHPGAVDSDFSRKFLTPLNYPTVIFGTVALPSETLKCPNRYCFRFTDGDLTICCDILGFEFRAIGSKICVLSWNFLPMNHSGGFLEIINWKFVDSGSLLSRCSGISSFPLIPSLYSSQNGDRKSRYSVCGVLESISPVSVVPCMDGVSSDSVNLPGFLVHVMACECKVYSRDAIDCGHAFERSVFVYFCGLEAASWHPVVMKLVGRNVALSGLKRKLVYVRGDSLLVFVTTENSVLHPPWLSKKGTVSKTVVDRRGNCGSYRGYVRGLYLKGKLVEMDEDVWLLLTDQILNRSHSIRTGSLIFIRNVHFVNTKFPWGEVLILGACFKTSITVEFFSPFETSCLVDSCRQTSLSLYVESLSFPARLWTLLVRISFEKFNRMPSDKEILRSCQKDELTKMYAESRIPPSMFQPRGGIFTEFCMHESCGCNSEARDCNLKLVMPISSFVHHVKVMLNELLSQIKKDFSASDCLSHSSSTWKRYNNTNPKTLRSEDTGVILLGRLKISSSGRLQLHDRTSSIDVLTPDLLSDRNASRICEVPDYYLIIEGIPESMLHMPFLKNPFRCSSVLNPTPLAIKNTLTVPFSLSLGTASCKHLLKHHPFDWRHDFNEFKEGFFHLFRVTHKFPILKNGHPGMPDCTSVFIEALVLPWDLICTVTEEEAAAPNFEEHDTSQEIRPHKRCKTNNGLQSQSFLSVPHEISCQMTIRCASSHCLVATATLSNLTENKSGKMHSAMRVLLEFIPECSNYYGLQIGGCYLMKHGSDDSFCVGRSGISNNDKINFRPETRLWSLEFSFDEVLTHDGSMDVHPLVSSQPSFAVEQQNVSSRQPCSDVSLLLPYDAKGLFSVFLNDLEGLNKPLAAGKDNNNISCCTQSETIMHAEPSRLLPSNSLFPEGNLATFRGDVVAVDAVTSSVVDVSSSYCINVLVNHQMVKIFGPLRRHSYLTGFGFGTNATFYRILGTGEQNSFVLTSASFIKINSRKALDSPPLEKPTHGAALCLPKITPQEFVPCILAGPACNSFSGNEDNQQIKFACKVLSVYLLVLQTRSDDPSENECRNNIDIPLAGFVVDDGSSTYLCWTSGERAFTILRLHEELPEETIDVVQWTRRYSNWGTTAYHLDQIVRVHKRIVMKCNGSQIDVLFQDITIAVTSDQLLTKSEDKFLKWLILNAISGPIWEVAASSMDMKMIEHLEREQCVEMETSRYNLQSVWGNEVCQVDPLVRAWSLLQGLLNS.

It belongs to the CTC1 family. As to quaternary structure, component of the CST complex, composed of CTC1, TEN1 and STN1. Interacts with POT1A.

The protein localises to the nucleus. It is found in the chromosome. Its subcellular location is the telomere. Functionally, component of the CST complex, a complex that binds to single-stranded DNA and is required to protect telomeres from DNA degradation. The CST complex binds single-stranded DNA with high affinity in a sequence-independent manner, while isolated subunits bind DNA with low affinity by themselves. Associates with enzymatically active telomerase. The sequence is that of CST complex subunit CTC1 from Arabidopsis thaliana (Mouse-ear cress).